The sequence spans 61 residues: Small ribosomal subunit protein uS14 (61 aa).

Residues C24, C27, C40, and C43 each coordinate Zn(2+).

Belongs to the universal ribosomal protein uS14 family. Zinc-binding uS14 subfamily. Part of the 30S ribosomal subunit. Contacts proteins S3 and S10. Zn(2+) serves as cofactor.

Its function is as follows. Binds 16S rRNA, required for the assembly of 30S particles and may also be responsible for determining the conformation of the 16S rRNA at the A site. In Leptospira borgpetersenii serovar Hardjo-bovis (strain JB197), this protein is Small ribosomal subunit protein uS14.